Consider the following 309-residue polypeptide: 4-hydroxy-3-methylbut-2-enyl diphosphate reductase (309 aa).

Cysteine 12 contributes to the [4Fe-4S] cluster binding site. Residues histidine 41 and histidine 74 each coordinate (2E)-4-hydroxy-3-methylbut-2-enyl diphosphate. 2 residues coordinate dimethylallyl diphosphate: histidine 41 and histidine 74. Isopentenyl diphosphate is bound by residues histidine 41 and histidine 74. Cysteine 96 contributes to the [4Fe-4S] cluster binding site. Position 124 (histidine 124) interacts with (2E)-4-hydroxy-3-methylbut-2-enyl diphosphate. Histidine 124 is a binding site for dimethylallyl diphosphate. An isopentenyl diphosphate-binding site is contributed by histidine 124. The active-site Proton donor is the glutamate 126. Residue threonine 167 coordinates (2E)-4-hydroxy-3-methylbut-2-enyl diphosphate. Cysteine 197 serves as a coordination point for [4Fe-4S] cluster. (2E)-4-hydroxy-3-methylbut-2-enyl diphosphate contacts are provided by serine 225, serine 226, asparagine 227, and serine 269. Dimethylallyl diphosphate is bound by residues serine 225, serine 226, asparagine 227, and serine 269. Residues serine 225, serine 226, asparagine 227, and serine 269 each contribute to the isopentenyl diphosphate site.

Belongs to the IspH family. Requires [4Fe-4S] cluster as cofactor.

It carries out the reaction isopentenyl diphosphate + 2 oxidized [2Fe-2S]-[ferredoxin] + H2O = (2E)-4-hydroxy-3-methylbut-2-enyl diphosphate + 2 reduced [2Fe-2S]-[ferredoxin] + 2 H(+). The enzyme catalyses dimethylallyl diphosphate + 2 oxidized [2Fe-2S]-[ferredoxin] + H2O = (2E)-4-hydroxy-3-methylbut-2-enyl diphosphate + 2 reduced [2Fe-2S]-[ferredoxin] + 2 H(+). It participates in isoprenoid biosynthesis; dimethylallyl diphosphate biosynthesis; dimethylallyl diphosphate from (2E)-4-hydroxy-3-methylbutenyl diphosphate: step 1/1. Its pathway is isoprenoid biosynthesis; isopentenyl diphosphate biosynthesis via DXP pathway; isopentenyl diphosphate from 1-deoxy-D-xylulose 5-phosphate: step 6/6. In terms of biological role, catalyzes the conversion of 1-hydroxy-2-methyl-2-(E)-butenyl 4-diphosphate (HMBPP) into a mixture of isopentenyl diphosphate (IPP) and dimethylallyl diphosphate (DMAPP). Acts in the terminal step of the DOXP/MEP pathway for isoprenoid precursor biosynthesis. In Pseudoalteromonas translucida (strain TAC 125), this protein is 4-hydroxy-3-methylbut-2-enyl diphosphate reductase.